Here is a 954-residue protein sequence, read N- to C-terminus: Lysine-specific demethylase JMJ14 (954 aa).

A disordered region spans residues 1 to 46 (MDQLASLAESVAMEEDSEKQSIKGESSLEPDSTPSSPKITARWNPS). The span at 29–38 (EPDSTPSSPK) shows a compositional bias: polar residues. The 42-residue stretch at 56-97 (APIFYPTNEDFDDPLGYIEKLRSKAESYGICRIVPPVAWRPP) folds into the JmjN domain. The Nuclear localization signal 1 signature appears at 136-143 (RKRRRISK). Residues 148 to 170 (RRKRDSGCDTASSGSSDSEGKFG) form a disordered region. A JmjC domain is found at 263-429 (QYSQCGWNLN…HGQNAVEGYS (167 aa)). Residues His-309, Glu-311, and His-397 each coordinate Fe cation. The Nuclear localization signal 2 motif lies at 470–477 (WKRVCSED). The Zn(2+) site is built by Cys-519, Cys-522, Cys-533, Cys-535, Cys-542, His-545, Cys-550, and Cys-552. A C5HC2 zinc finger spans residues 519 to 571 (CFLCFYDLHMSASSCKCSPNRFACLIHAKDLCSCESKDRYILIRHTLDELWAL). The segment at 641 to 670 (SNKEVQLKQDGDSDVNRHGHESERNHVHGI) is disordered. A compositionally biased stretch (basic and acidic residues) spans 645–670 (VQLKQDGDSDVNRHGHESERNHVHGI). The region spanning 726–784 (ATNRLSLSVELLSSGSLVVKKLWCSKQAIYPKGFKSRVKFLSVLDPTNLTNYISEVLDA) is the FYR N-terminal domain. An FYR C-terminal domain is found at 786–876 (LLGPLFRVSV…HQLEEYWNQK (91 aa)). A disordered region spans residues 884-905 (EPIKEGEKDDTEKGGASDPSLD). A compositionally biased stretch (basic and acidic residues) spans 885–905 (PIKEGEKDDTEKGGASDPSLD).

Belongs to the JARID1 histone demethylase family. As to quaternary structure, interacts with NAC050 and NAC051/NAC052. Interacts with THAL in the nucleus. The cofactor is Fe(2+). In terms of tissue distribution, expressed in shoot apex, primary root tip, trichomes of young leaves, leaf vascular tissues, anther filaments and styles. Detected in inflorescences, leaves, stems, roots and siliques. Mostly expressed in floral organs, and, at low levels, in other organs.

Its subcellular location is the nucleus. The protein resides in the nucleoplasm. It carries out the reaction N(6),N(6),N(6)-trimethyl-L-lysyl(4)-[histone H3] + 2-oxoglutarate + O2 = N(6),N(6)-dimethyl-L-lysyl(4)-[histone H3] + formaldehyde + succinate + CO2. The catalysed reaction is N(6),N(6)-dimethyl-L-lysyl(4)-[histone H3] + 2-oxoglutarate + O2 = N(6)-methyl-L-lysyl(4)-[histone H3] + formaldehyde + succinate + CO2. The enzyme catalyses N(6)-methyl-L-lysyl(4)-[histone H3] + 2-oxoglutarate + O2 = L-lysyl(4)-[histone H3] + formaldehyde + succinate + CO2. It catalyses the reaction N(6),N(6),N(6)-trimethyl-L-lysyl(4)-[histone H3] + 3 2-oxoglutarate + 3 O2 = L-lysyl(4)-[histone H3] + 3 formaldehyde + 3 succinate + 3 CO2. Transcriptional repressor. Histone demethylase that demethylates 'Lys-4' (H3K4me) of histone H3 with a higher activity for H3K4me3 and H3K4me2 than H3K4me1. No activity on H3K9me3/2, H3K36me3/2 and H3K27me3/2. Function as a nocturne 'eraser' to counteract the diurnal 'writer' methylase activity of ATXR3/SDG2 thus orchestrating the circadian rhythm of histone modifications (e.g. H3K4me3) and modulating the rhythmic expression of diurnal target genes; this mechanism also relies on the circadian clock oscillators CCA1 and LHY. Involved in a negative regulation of root meristem growth upon suboptimal root growth conditions. Represses FT and TSF expression to inhibit the floral transition. Binds around the transcription start site of the FT locus. Involved in the DRM2-mediated maintenance of DNA methylation, but not required for the de novo DNA methylation. Required for demethylating histone H3K4me3 at the target of RNA silencing. Counteracts the DNA methylation of expressed transgenes; specific attenuation of transgene DNA methylation enhances the production of aberrant RNAs (e.g. uncapped and antisense) that readily induce systemic RDR6-dependent post-transcriptional transgene silencing (PTGS) spreading. Together with NAC051/NAC052 and NAC050, regulates gene expression and flowering time, probably by the promotion of RNA-mediated gene silencing. Together with JMJ16 and JMJ17, required for plant growth and development. Promotes local and systemic immunity (especially toward the bacterial pathogen Pseudomonas syringae Pst DC3000 avrRpt2) by regulating positively pathogen-induced H3K4me3 enrichment and expression of defense genes involved in salicylic acid (SA)- and pipecolic acid (Pip)-mediated defense pathways (e.g. PR1, FMO1, ALD1 and SARD4). In Arabidopsis thaliana (Mouse-ear cress), this protein is Lysine-specific demethylase JMJ14.